The chain runs to 449 residues: Tubulin beta-2 chain (449 aa).

GTP-binding residues include Q11 and E69. A Mg(2+)-binding site is contributed by E69. H137 carries the methylhistidine modification. Residues S138, G142, T143, G144, N204, and N226 each contribute to the GTP site.

It belongs to the tubulin family. In terms of assembly, dimer of alpha and beta chains. A typical microtubule is a hollow water-filled tube with an outer diameter of 25 nm and an inner diameter of 15 nM. Alpha-beta heterodimers associate head-to-tail to form protofilaments running lengthwise along the microtubule wall with the beta-tubulin subunit facing the microtubule plus end conferring a structural polarity. Microtubules usually have 13 protofilaments but different protofilament numbers can be found in some organisms and specialized cells. Requires Mg(2+) as cofactor.

It localises to the cytoplasm. Its subcellular location is the cytoskeleton. Its function is as follows. Tubulin is the major constituent of microtubules, a cylinder consisting of laterally associated linear protofilaments composed of alpha- and beta-tubulin heterodimers. Microtubules grow by the addition of GTP-tubulin dimers to the microtubule end, where a stabilizing cap forms. Below the cap, tubulin dimers are in GDP-bound state, owing to GTPase activity of alpha-tubulin. This is Tubulin beta-2 chain (tubC) from Emericella nidulans (strain FGSC A4 / ATCC 38163 / CBS 112.46 / NRRL 194 / M139) (Aspergillus nidulans).